A 508-amino-acid polypeptide reads, in one-letter code: Catalase (508 aa).

A signal peptide spans 1-21 (MHMSKSFLLISMGLASISVHA). Active-site residues include His-72 and Asn-145. Tyr-353 serves as a coordination point for heme. Polar residues predominate over residues 373–392 (PKSPVANHNQDGPSNNSTGL). A disordered region spans residues 373–396 (PKSPVANHNQDGPSNNSTGLGNVD).

Belongs to the catalase family. The cofactor is heme.

It localises to the periplasm. The enzyme catalyses 2 H2O2 = O2 + 2 H2O. In terms of biological role, decomposes hydrogen peroxide into water and oxygen; serves to protect cells from the toxic effects of hydrogen peroxide. The protein is Catalase of Vibrio vulnificus (strain YJ016).